Consider the following 318-residue polypeptide: Methionyl-tRNA formyltransferase (318 aa).

Position 112–115 (112–115 (SILP)) interacts with (6S)-5,6,7,8-tetrahydrofolate.

The protein belongs to the Fmt family.

The enzyme catalyses L-methionyl-tRNA(fMet) + (6R)-10-formyltetrahydrofolate = N-formyl-L-methionyl-tRNA(fMet) + (6S)-5,6,7,8-tetrahydrofolate + H(+). Its function is as follows. Attaches a formyl group to the free amino group of methionyl-tRNA(fMet). The formyl group appears to play a dual role in the initiator identity of N-formylmethionyl-tRNA by promoting its recognition by IF2 and preventing the misappropriation of this tRNA by the elongation apparatus. This is Methionyl-tRNA formyltransferase from Shewanella baltica (strain OS155 / ATCC BAA-1091).